Consider the following 337-residue polypeptide: MTHQVSVLHQDKKFDVSLRPKGLKEFCGQAQLTERLELFLNAAIQRGEVPGHCLFFGPPGLGKTSLAHIVANTVGKGLLVASGPQLVKPSDLLGLLTSLQEGDVFFIDEIHRMGKVAEEYLYSAMEDYKIDITIDSGPGARSVSVDLAPFSLVGATTRSGMLSEPLRARFSFTGRVAYYSDEDLATILRRSSNLLGIDADASALYEIARRSRGTPRLANNLLRWVRDFAQMREGNCINSDVAEKALAMLLIDEWGLNEIDIKLLTTIMNYYQGGPVGIKTLSVAVGEDVRTLEDVYEPFLILKGLLKKTSRGRMVTQLAYNHLKRCSDNLQSLGEEK.

The large ATPase domain (RuvB-L) stretch occupies residues 1–179 (MTHQVSVLHQ…FSFTGRVAYY (179 aa)). ATP contacts are provided by residues leucine 18, arginine 19, glycine 60, lysine 63, threonine 64, serine 65, 126–128 (EDY), arginine 169, tyrosine 179, and arginine 216. Threonine 64 contacts Mg(2+). A small ATPAse domain (RuvB-S) region spans residues 180–250 (SDEDLATILR…VAEKALAMLL (71 aa)). A head domain (RuvB-H) region spans residues 253–337 (EWGLNEIDIK…DNLQSLGEEK (85 aa)). The DNA site is built by lysine 308 and arginine 313.

Belongs to the RuvB family. Homohexamer. Forms an RuvA(8)-RuvB(12)-Holliday junction (HJ) complex. HJ DNA is sandwiched between 2 RuvA tetramers; dsDNA enters through RuvA and exits via RuvB. An RuvB hexamer assembles on each DNA strand where it exits the tetramer. Each RuvB hexamer is contacted by two RuvA subunits (via domain III) on 2 adjacent RuvB subunits; this complex drives branch migration. In the full resolvosome a probable DNA-RuvA(4)-RuvB(12)-RuvC(2) complex forms which resolves the HJ.

It is found in the cytoplasm. The enzyme catalyses ATP + H2O = ADP + phosphate + H(+). Its function is as follows. The RuvA-RuvB-RuvC complex processes Holliday junction (HJ) DNA during genetic recombination and DNA repair, while the RuvA-RuvB complex plays an important role in the rescue of blocked DNA replication forks via replication fork reversal (RFR). RuvA specifically binds to HJ cruciform DNA, conferring on it an open structure. The RuvB hexamer acts as an ATP-dependent pump, pulling dsDNA into and through the RuvAB complex. RuvB forms 2 homohexamers on either side of HJ DNA bound by 1 or 2 RuvA tetramers; 4 subunits per hexamer contact DNA at a time. Coordinated motions by a converter formed by DNA-disengaged RuvB subunits stimulates ATP hydrolysis and nucleotide exchange. Immobilization of the converter enables RuvB to convert the ATP-contained energy into a lever motion, pulling 2 nucleotides of DNA out of the RuvA tetramer per ATP hydrolyzed, thus driving DNA branch migration. The RuvB motors rotate together with the DNA substrate, which together with the progressing nucleotide cycle form the mechanistic basis for DNA recombination by continuous HJ branch migration. Branch migration allows RuvC to scan DNA until it finds its consensus sequence, where it cleaves and resolves cruciform DNA. The protein is Holliday junction branch migration complex subunit RuvB of Chlamydia abortus (strain DSM 27085 / S26/3) (Chlamydophila abortus).